We begin with the raw amino-acid sequence, 353 residues long: Cyanuric acid amidohydrolase (353 aa).

The tract at residues 1 to 90 (MSSTALYTVP…NIFVRDERQY (90 aa)) is RU A. Substrate contacts are provided by residues arginine 49 and 69 to 70 (SG). Residues 96-231 (GLVTAVGRTR…CHILVVAESD (136 aa)) are RU B. Residue lysine 145 is part of the active site. Residues arginine 177 and 214 to 215 (SS) contribute to the substrate site. The Nucleophile role is filled by serine 214. The interval 237–353 (LRAAHTAMRD…TANATGEASR (117 aa)) is RU C. Mg(2+) is bound at residue glutamate 275. Substrate-binding positions include arginine 302 and 321–322 (SG). Positions 324, 327, 328, 329, and 332 each coordinate Mg(2+).

Belongs to the cyclic amide hydrolase (CyAH) family. In terms of assembly, homotetramer.

It catalyses the reaction cyanurate + H2O = 1-carboxybiuret + H(+). Its pathway is xenobiotic degradation; atrazine degradation; biuret from cyanurate: step 1/1. Inhibited by barbituric acid. Functionally, responsible for the hydrolysis of cyanuric acid, an intermediate formed during catabolism of s-triazine based compounds in herbicides such as atrazine and polymers such as melamine. Catalyzes the hydrolytic opening of the s-triazine ring of cyanuric acid (2,4,6-trihydroxy-s-triazine) to yield carbon dioxide and carboxybiuret, which spontaneously decarboxylates to biuret. Required for growth on melamine or cyanuric acid as sole nitrogen source. This is Cyanuric acid amidohydrolase from Rhodococcus sp.